Here is a 154-residue protein sequence, read N- to C-terminus: NADPH-dependent 7-cyano-7-deazaguanine reductase (154 aa).

Positions 1 to 11 are enriched in basic and acidic residues; the sequence is MAKKPVKDLKQ. Positions 1-31 are disordered; that stretch reads MAKKPVKDLKQLGHATPVPASPEEATLERVP. Cys52 serves as the catalytic Thioimide intermediate. The active-site Proton donor is the Asp59. Substrate is bound by residues 74–76 and 93–94; these read IES and HE.

It belongs to the GTP cyclohydrolase I family. QueF type 1 subfamily.

It is found in the cytoplasm. It catalyses the reaction 7-aminomethyl-7-carbaguanine + 2 NADP(+) = 7-cyano-7-deazaguanine + 2 NADPH + 3 H(+). It functions in the pathway tRNA modification; tRNA-queuosine biosynthesis. Catalyzes the NADPH-dependent reduction of 7-cyano-7-deazaguanine (preQ0) to 7-aminomethyl-7-deazaguanine (preQ1). The protein is NADPH-dependent 7-cyano-7-deazaguanine reductase of Parvibaculum lavamentivorans (strain DS-1 / DSM 13023 / NCIMB 13966).